The chain runs to 729 residues: Fatty acid oxidation complex subunit alpha (729 aa).

Residues 1-189 are enoyl-CoA hydratase/isomerase; sequence MLYKGDTLYL…KIGLVDGVVK (189 aa). Residue aspartate 296 coordinates substrate. The interval 311–729 is 3-hydroxyacyl-CoA dehydrogenase; the sequence is ETPKQAAVLG…ARPVGDLKTA (419 aa). Residues methionine 324, aspartate 343, 400–402, lysine 407, and serine 429 each bind NAD(+); that span reads VVE. Histidine 450 acts as the For 3-hydroxyacyl-CoA dehydrogenase activity in catalysis. Asparagine 453 contributes to the NAD(+) binding site. Positions 500 and 660 each coordinate substrate. The tract at residues 708–729 is disordered; the sequence is RHNEPYYPPVEPARPVGDLKTA.

In the N-terminal section; belongs to the enoyl-CoA hydratase/isomerase family. The protein in the C-terminal section; belongs to the 3-hydroxyacyl-CoA dehydrogenase family. In terms of assembly, heterotetramer of two alpha chains (FadB) and two beta chains (FadA).

The catalysed reaction is a (3S)-3-hydroxyacyl-CoA + NAD(+) = a 3-oxoacyl-CoA + NADH + H(+). It carries out the reaction a (3S)-3-hydroxyacyl-CoA = a (2E)-enoyl-CoA + H2O. The enzyme catalyses a 4-saturated-(3S)-3-hydroxyacyl-CoA = a (3E)-enoyl-CoA + H2O. It catalyses the reaction (3S)-3-hydroxybutanoyl-CoA = (3R)-3-hydroxybutanoyl-CoA. The catalysed reaction is a (3Z)-enoyl-CoA = a 4-saturated (2E)-enoyl-CoA. It carries out the reaction a (3E)-enoyl-CoA = a 4-saturated (2E)-enoyl-CoA. It functions in the pathway lipid metabolism; fatty acid beta-oxidation. Involved in the aerobic and anaerobic degradation of long-chain fatty acids via beta-oxidation cycle. Catalyzes the formation of 3-oxoacyl-CoA from enoyl-CoA via L-3-hydroxyacyl-CoA. It can also use D-3-hydroxyacyl-CoA and cis-3-enoyl-CoA as substrate. In Escherichia coli O7:K1 (strain IAI39 / ExPEC), this protein is Fatty acid oxidation complex subunit alpha.